Reading from the N-terminus, the 238-residue chain is 7-cyano-7-deazaguanine synthase (238 aa).

15–25 contributes to the ATP binding site; it reads FSGGQDSTTCL. Positions 203, 218, 221, and 224 each coordinate Zn(2+).

It belongs to the QueC family. It depends on Zn(2+) as a cofactor.

The enzyme catalyses 7-carboxy-7-deazaguanine + NH4(+) + ATP = 7-cyano-7-deazaguanine + ADP + phosphate + H2O + H(+). It participates in purine metabolism; 7-cyano-7-deazaguanine biosynthesis. Its function is as follows. Catalyzes the ATP-dependent conversion of 7-carboxy-7-deazaguanine (CDG) to 7-cyano-7-deazaguanine (preQ(0)). The chain is 7-cyano-7-deazaguanine synthase from Alkalilimnicola ehrlichii (strain ATCC BAA-1101 / DSM 17681 / MLHE-1).